The sequence spans 180 residues: Riboflavin kinase (180 aa).

Mg(2+) contacts are provided by Thr-40 and Asn-42. The Nucleophile role is filled by Glu-117.

Belongs to the flavokinase family. Zn(2+) serves as cofactor. The cofactor is Mg(2+).

It catalyses the reaction riboflavin + ATP = FMN + ADP + H(+). Its pathway is cofactor biosynthesis; FMN biosynthesis; FMN from riboflavin (ATP route): step 1/1. Functionally, catalyzes the phosphorylation of riboflavin (vitamin B2) to form flavin mononucleotide (FMN) coenzyme. In Meyerozyma guilliermondii (strain ATCC 6260 / CBS 566 / DSM 6381 / JCM 1539 / NBRC 10279 / NRRL Y-324) (Yeast), this protein is Riboflavin kinase (FMN1).